The sequence spans 301 residues: GTPase Era (301 aa).

The region spanning 7–175 is the Era-type G domain; it reads YCGFIAIVGR…AAIVRKHLPE (169 aa). Residues 15 to 22 are G1; it reads GRPNVGKS. 15 to 22 is a binding site for GTP; sequence GRPNVGKS. Residues 41–45 are G2; that stretch reads QTTRH. Residues 62–65 form a G3 region; that stretch reads DTPG. GTP contacts are provided by residues 62 to 66 and 124 to 127; these read DTPGL and NKVD. The G4 stretch occupies residues 124 to 127; sequence NKVD. A G5 region spans residues 154–156; that stretch reads ISA. The 78-residue stretch at 206-283 folds into the KH type-2 domain; sequence LGAELPYSVT…HLELWVKVKS (78 aa).

Belongs to the TRAFAC class TrmE-Era-EngA-EngB-Septin-like GTPase superfamily. Era GTPase family. In terms of assembly, monomer.

The protein localises to the cytoplasm. The protein resides in the cell inner membrane. In terms of biological role, an essential GTPase that binds both GDP and GTP, with rapid nucleotide exchange. Plays a role in 16S rRNA processing and 30S ribosomal subunit biogenesis and possibly also in cell cycle regulation and energy metabolism. The chain is GTPase Era from Shigella flexneri.